Here is a 379-residue protein sequence, read N- to C-terminus: Oxidoreductase chry3 (379 aa).

Disordered stretches follow at residues 1–23 (MTTA…QPTP) and 126–150 (EGDD…TSHM). Residues 126–138 (EGDDSAPAEEEAD) are compositionally biased toward acidic residues.

The protein belongs to the asaB hydroxylase/desaturase family.

Its pathway is pigment biosynthesis. Its function is as follows. Oxidoreductase; part of the gene cluster that mediates the biosynthesis of the yellow pigment chrysogine. Pyruvic acid and anthranilic acid are likely substrates for the nonribosomal peptide synthetase chry1/NRPS14, with pyruvic acid adenylated by the first A domain and anthranilic acid by the second. If pyruvic acid and anthranilic acid are merged and released from chry1/NRPS14 by hydrolysis, a subsequent amidation would lead to 2-pyruvoylaminobenzamide. This process is probably catalyzed by the amidotransferase chry2 using glutamine as amino donor. The dehydrogenase chry5 that has a terminal berberine bridge domain for C-N cyclization could catalyze the cyclization of 2-pyruvoylaminobenzamide to yield acetyl-4(3H)-quinazolidinone. A final reduction of acetyl-4(3H)-quinazolidinone catalyzed by the oxidoreductase chry4 would result in chrysogine. The sequence is that of Oxidoreductase chry3 from Gibberella zeae (strain ATCC MYA-4620 / CBS 123657 / FGSC 9075 / NRRL 31084 / PH-1) (Wheat head blight fungus).